The sequence spans 392 residues: S-adenosylmethionine synthase (392 aa).

Glutamate 10 lines the Mg(2+) pocket. Histidine 16 contributes to the ATP binding site. Glutamate 44 provides a ligand contact to K(+). Residues glutamate 57 and glutamine 100 each coordinate L-methionine. Residues 168-170 (DGK), 236-239 (SGRF), aspartate 247, 253-254 (RK), alanine 270, lysine 274, and lysine 278 contribute to the ATP site. Position 247 (aspartate 247) interacts with L-methionine. Lysine 278 provides a ligand contact to L-methionine.

This sequence belongs to the AdoMet synthase family. Homotetramer. Requires Mn(2+) as cofactor. Mg(2+) serves as cofactor. The cofactor is Co(2+). It depends on K(+) as a cofactor.

The protein resides in the cytoplasm. It carries out the reaction L-methionine + ATP + H2O = S-adenosyl-L-methionine + phosphate + diphosphate. The protein operates within amino-acid biosynthesis; S-adenosyl-L-methionine biosynthesis; S-adenosyl-L-methionine from L-methionine: step 1/1. Functionally, catalyzes the formation of S-adenosylmethionine from methionine and ATP. The reaction comprises two steps that are both catalyzed by the same enzyme: formation of S-adenosylmethionine (AdoMet) and triphosphate, and subsequent hydrolysis of the triphosphate. The sequence is that of S-adenosylmethionine synthase (SAMS) from Phaseolus lunatus (Lima bean).